Consider the following 688-residue polypeptide: Potassium-transporting ATPase ATP-binding subunit (688 aa).

The next 4 membrane-spanning stretches (helical) occupy residues 37-57, 65-85, 219-239, and 262-282; these read FIVYIASILTTVLYVFSLFGI, ILFISILLWFTVLFANFAEAI, IALQILLVSLTIIFLVVTASL, and LALLVCLAPTTIGALLSAIGI. Asp313 serves as the catalytic 4-aspartylphosphate intermediate. ATP is bound by residues Asp350, Glu354, 383 to 390, and Lys401; that span reads FTAKTRMS. Residues Asp524 and Asp528 each contribute to the Mg(2+) site. The next 3 helical transmembrane spans lie at 586-606, 622-642, and 668-688; these read IANDIAKYFAIIPPLFIGLFP, AILSAVIYNAFIIIFLIPLAL, and IIAPFIAIKGIDILITMLGIV.

Belongs to the cation transport ATPase (P-type) (TC 3.A.3) family. Type IA subfamily. In terms of assembly, the system is composed of three essential subunits: KdpA, KdpB and KdpC.

Its subcellular location is the cell membrane. The catalysed reaction is K(+)(out) + ATP + H2O = K(+)(in) + ADP + phosphate + H(+). In terms of biological role, part of the high-affinity ATP-driven potassium transport (or Kdp) system, which catalyzes the hydrolysis of ATP coupled with the electrogenic transport of potassium into the cytoplasm. This subunit is responsible for energy coupling to the transport system and for the release of the potassium ions to the cytoplasm. This Clostridium perfringens (strain ATCC 13124 / DSM 756 / JCM 1290 / NCIMB 6125 / NCTC 8237 / Type A) protein is Potassium-transporting ATPase ATP-binding subunit.